Reading from the N-terminus, the 313-residue chain is Ribosomal RNA small subunit methyltransferase H (313 aa).

Residues 35 to 37, D55, F79, D101, and Q108 each bind S-adenosyl-L-methionine; that span reads GGH.

The protein belongs to the methyltransferase superfamily. RsmH family.

It localises to the cytoplasm. It catalyses the reaction cytidine(1402) in 16S rRNA + S-adenosyl-L-methionine = N(4)-methylcytidine(1402) in 16S rRNA + S-adenosyl-L-homocysteine + H(+). Functionally, specifically methylates the N4 position of cytidine in position 1402 (C1402) of 16S rRNA. This chain is Ribosomal RNA small subunit methyltransferase H, found in Shigella flexneri serotype 5b (strain 8401).